The chain runs to 130 residues: MGIVGVGIDLVSIPDFAEQVDQPGTVFAETFTPGERRDASDKSSSAARLPLARWAAKEAVIKAWSGSRFAQRPVLPEDIHRDIEVVTDMWGRPRVRLTGAIAEYLADVTIHVSLTHEGDTAAAVAILEAP.

The Mg(2+) site is built by D9 and E58.

It belongs to the P-Pant transferase superfamily. AcpS family. It depends on Mg(2+) as a cofactor.

The protein localises to the cytoplasm. It carries out the reaction apo-[ACP] + CoA = holo-[ACP] + adenosine 3',5'-bisphosphate + H(+). Its function is as follows. Transfers the 4'-phosphopantetheine moiety from coenzyme A to a Ser of acyl-carrier-protein. In Mycobacterium tuberculosis (strain CDC 1551 / Oshkosh), this protein is Holo-[acyl-carrier-protein] synthase.